Here is a 184-residue protein sequence, read N- to C-terminus: uncharacterized protein (184 aa).

This is an uncharacterized protein from Clostridium acetobutylicum (strain ATCC 824 / DSM 792 / JCM 1419 / IAM 19013 / LMG 5710 / NBRC 13948 / NRRL B-527 / VKM B-1787 / 2291 / W).